The chain runs to 925 residues: Protein translocase subunit SecA (925 aa).

Residues Gln87, 105–109 (GEGKT), and Asp515 contribute to the ATP site. Cys909, Cys911, Cys920, and His921 together coordinate Zn(2+).

The protein belongs to the SecA family. As to quaternary structure, monomer and homodimer. Part of the essential Sec protein translocation apparatus which comprises SecA, SecYEG and auxiliary proteins SecDF-YajC and YidC. Zn(2+) is required as a cofactor.

It localises to the cell inner membrane. The protein resides in the cytoplasm. The catalysed reaction is ATP + H2O + cellular proteinSide 1 = ADP + phosphate + cellular proteinSide 2.. Functionally, part of the Sec protein translocase complex. Interacts with the SecYEG preprotein conducting channel. Has a central role in coupling the hydrolysis of ATP to the transfer of proteins into and across the cell membrane, serving both as a receptor for the preprotein-SecB complex and as an ATP-driven molecular motor driving the stepwise translocation of polypeptide chains across the membrane. The sequence is that of Protein translocase subunit SecA from Cupriavidus necator (strain ATCC 17699 / DSM 428 / KCTC 22496 / NCIMB 10442 / H16 / Stanier 337) (Ralstonia eutropha).